The following is a 240-amino-acid chain: Protein OPG176 (240 aa).

The protein belongs to the orthopoxvirus OPG176 family. Tetramer. Interacts with host MYD88, TRF4, TICAM2 and MAL.

BCL2-like protein which disrupts the host immune response by inhibiting the TLR4 signaling pathway leading to NF-kappa-B activation. Acts close to the plasma membrane and targets several host TIR-domain containing adapter proteins including MYD88, TIRAP, TRIF and TICAM2. In turn, blocks the host NF-kappa-B and TRIF-mediated IRF3 activation. This Bos taurus (Bovine) protein is Protein OPG176 (OPG176).